The chain runs to 447 residues: ATP-dependent protease ATPase subunit HslU (447 aa).

ATP contacts are provided by residues I17, 59 to 64 (GVGKTE), D256, E321, and R393.

Belongs to the ClpX chaperone family. HslU subfamily. As to quaternary structure, a double ring-shaped homohexamer of HslV is capped on each side by a ring-shaped HslU homohexamer. The assembly of the HslU/HslV complex is dependent on binding of ATP.

The protein resides in the cytoplasm. ATPase subunit of a proteasome-like degradation complex; this subunit has chaperone activity. The binding of ATP and its subsequent hydrolysis by HslU are essential for unfolding of protein substrates subsequently hydrolyzed by HslV. HslU recognizes the N-terminal part of its protein substrates and unfolds these before they are guided to HslV for hydrolysis. The protein is ATP-dependent protease ATPase subunit HslU of Pseudomonas putida (strain W619).